A 404-amino-acid polypeptide reads, in one-letter code: Probable tRNA sulfurtransferase (404 aa).

The THUMP domain occupies 61 to 166; the sequence is EAVSERLKDV…SGYSYIMCDE (106 aa). ATP-binding positions include 184-185, 209-210, arginine 266, glycine 288, and glutamine 297; these read LL and HF.

The protein belongs to the ThiI family.

The protein resides in the cytoplasm. It carries out the reaction [ThiI sulfur-carrier protein]-S-sulfanyl-L-cysteine + a uridine in tRNA + 2 reduced [2Fe-2S]-[ferredoxin] + ATP + H(+) = [ThiI sulfur-carrier protein]-L-cysteine + a 4-thiouridine in tRNA + 2 oxidized [2Fe-2S]-[ferredoxin] + AMP + diphosphate. It catalyses the reaction [ThiS sulfur-carrier protein]-C-terminal Gly-Gly-AMP + S-sulfanyl-L-cysteinyl-[cysteine desulfurase] + AH2 = [ThiS sulfur-carrier protein]-C-terminal-Gly-aminoethanethioate + L-cysteinyl-[cysteine desulfurase] + A + AMP + 2 H(+). It functions in the pathway cofactor biosynthesis; thiamine diphosphate biosynthesis. In terms of biological role, catalyzes the ATP-dependent transfer of a sulfur to tRNA to produce 4-thiouridine in position 8 of tRNAs, which functions as a near-UV photosensor. Also catalyzes the transfer of sulfur to the sulfur carrier protein ThiS, forming ThiS-thiocarboxylate. This is a step in the synthesis of thiazole, in the thiamine biosynthesis pathway. The sulfur is donated as persulfide by IscS. In Bacillus cereus (strain ATCC 10987 / NRS 248), this protein is Probable tRNA sulfurtransferase.